We begin with the raw amino-acid sequence, 99 residues long: Ferredoxin-2 (99 aa).

A 2Fe-2S ferredoxin-type domain is found at 4–96 (YQVRLINKKR…DCTIRTHQEA (93 aa)). 4 residues coordinate [2Fe-2S] cluster: C42, C47, C50, and C80.

It belongs to the 2Fe2S plant-type ferredoxin family. [2Fe-2S] cluster serves as cofactor.

Its function is as follows. Ferredoxins are iron-sulfur proteins that transfer electrons in a wide variety of metabolic reactions. Donates electrons to the nitrogenase. This chain is Ferredoxin-2 (fdxH), found in Leptolyngbya boryana (Plectonema boryanum).